A 257-amino-acid polypeptide reads, in one-letter code: UPF0246 protein YaaA (257 aa).

The protein belongs to the UPF0246 family.

This Salmonella schwarzengrund (strain CVM19633) protein is UPF0246 protein YaaA.